Here is a 1043-residue protein sequence, read N- to C-terminus: Polycomb protein Pcl (1043 aa).

Disordered stretches follow at residues 1-34 (MMNNHFHLQHDHPPQNVAHPFMQQPSTAVPSAPP), 271-302 (PDSTTTTPQTPPTTPEAMSSPGKSSPSPPLLA), 317-346 (FKTVEAAPPTPPTPPSPPPPPPAPPVAAPS), and 395-422 (KLRKLGGGSSITAGGGGASTTESTNTSP). Over residues 25 to 34 (PSTAVPSAPP) the composition is skewed to low complexity. Residues 324–344 (PPTPPTPPSPPPPPPAPPVAA) are compositionally biased toward pro residues. The Tudor domain maps to 349-404 (VTYALQEDVFIKCNDGRFYLGTIIDQTSDQYLIRFDDQSEQWCEPDKLRKLGGGSS). Positions 399–412 (LGGGSSITAGGGGA) are enriched in gly residues. PHD-type zinc fingers lie at residues 424–472 (GPMC…CAKP) and 512–560 (QIYC…VFCC). Basic and acidic residues predominate over residues 737–757 (AKKQAAQKADKHDELPLKPDL). Disordered stretches follow at residues 737–819 (AKKQ…TSSL) and 931–985 (AKDL…PGHS). The segment covering 783 to 792 (SRKRKAFRLS) has biased composition (basic residues). Over residues 793–804 (KRYDNSRNHCDL) the composition is skewed to basic and acidic residues. Phosphoserine is present on residues Ser-805 and Ser-806. Residues 807 to 819 (DENSSSSRGTSSL) are compositionally biased toward low complexity. Basic residues predominate over residues 945–954 (THGRLLRQRP). Residues 955–977 (QKQSPSQSRRNSTSSTATSSSSN) show a composition bias toward low complexity.

It belongs to the Polycomblike family. As to quaternary structure, component of a form of the Esc/E(z) complex present specifically during early embryogenesis which is composed of Caf1-55, esc, E(z), Su(z)12, Pcl and HDAC1/Rpd3. This complex is distinct from the PRC1 complex, which contains many other PcG proteins like Pc, Ph, Psc, Su(z)2. The two complexes however cooperate and interact together during the first 3 hours of development to establish PcG silencing. Interacts with corto in vitro.

It localises to the nucleus. It is found in the chromosome. Its function is as follows. Polycomb group (PcG) protein. While PcG proteins are generally required to maintain the transcriptionally repressive state of homeotic genes throughout development, this protein is specifically required during the first 6 hours of embryogenesis to establish the repressed state. Component of the Esc/E(z) complex, which methylates 'Lys-9' and 'Lys-27' residues of histone H3, leading to transcriptional repression of the affected target gene. The Esc/E(z) complex is necessary but not sufficient for the repression of homeotic target genes, suggesting that the recruitment of the distinct PRC1 complex is also required. Required for the correct spatial expression of the homeotic genes of the Antennapedia and Bithorax complexes. In Drosophila melanogaster (Fruit fly), this protein is Polycomb protein Pcl (Pcl).